The sequence spans 361 residues: Mannose-1-phosphate guanylyltransferase 1 (361 aa).

The GDP-alpha-D-mannose site is built by Leu-6 and Val-7. Gly-9, Gly-11, Thr-12, Arg-13, and Lys-23 together coordinate diphosphate. Positions 85, 109, 111, 146, and 173 each coordinate GDP-alpha-D-mannose.

The protein belongs to the transferase hexapeptide repeat family. As to quaternary structure, interacts in vitro with CSN5A and CSN5B, but in planta only with CSN5B, which targets CYT1 for degradation in the dark by the 26S proteasome. Forms homodimers in the unliganded structure. The product-bound structure is composed of six dimers that form a dodecameric assembly.

The protein resides in the cytoplasm. The protein localises to the nucleus. It catalyses the reaction alpha-D-mannose 1-phosphate + GTP + H(+) = GDP-alpha-D-mannose + diphosphate. The protein operates within nucleotide-sugar biosynthesis; GDP-alpha-D-mannose biosynthesis; GDP-alpha-D-mannose from alpha-D-mannose 1-phosphate (GTP route): step 1/1. In terms of biological role, essential protein during embryogenesis. Catalyzes a reaction of the Smirnoff-Wheeler pathway, the major route to ascorbate biosynthesis in plants. Plays an essential role in plant growth and development and cell-wall architecture. Provides GDP-mannose, used for cell wall carbohydrate biosynthesis, protein N-glycosylation, as well as for the biosynthesis of the antioxidant ascorbate. This chain is Mannose-1-phosphate guanylyltransferase 1, found in Arabidopsis thaliana (Mouse-ear cress).